The sequence spans 116 residues: NADPH-dependent 7-cyano-7-deazaguanine reductase (116 aa).

Catalysis depends on Cys31, which acts as the Thioimide intermediate. The active-site Proton donor is the Asp38. Residues 53 to 55 (VEL) and 72 to 73 (YE) each bind substrate.

The protein belongs to the GTP cyclohydrolase I family. QueF type 1 subfamily.

Its subcellular location is the cytoplasm. It carries out the reaction 7-aminomethyl-7-carbaguanine + 2 NADP(+) = 7-cyano-7-deazaguanine + 2 NADPH + 3 H(+). It participates in tRNA modification; tRNA-queuosine biosynthesis. Its function is as follows. Catalyzes the NADPH-dependent reduction of 7-cyano-7-deazaguanine (preQ0) to 7-aminomethyl-7-deazaguanine (preQ1). In Chlorobium chlorochromatii (strain CaD3), this protein is NADPH-dependent 7-cyano-7-deazaguanine reductase.